Reading from the N-terminus, the 292-residue chain is ATP synthase subunit a (292 aa).

The next 7 membrane-spanning stretches (helical) occupy residues 39-59 (QILG…FYKL), 73-93 (FLLL…DLLG), 102-122 (YFLM…LGGI), 128-148 (SLTF…VMGI), 172-192 (TFIP…SISL), 196-216 (GNIL…IFIF), and 231-251 (VFAG…AGVL).

This sequence belongs to the ATPase A chain family. As to quaternary structure, F-type ATPases have 2 components, CF(1) - the catalytic core - and CF(0) - the membrane proton channel. CF(1) has five subunits: alpha(3), beta(3), gamma(1), delta(1), epsilon(1). CF(0) has three main subunits: a(1), b(2) and c(9-12). The alpha and beta chains form an alternating ring which encloses part of the gamma chain. CF(1) is attached to CF(0) by a central stalk formed by the gamma and epsilon chains, while a peripheral stalk is formed by the delta and b chains.

Its subcellular location is the cell membrane. Key component of the proton channel; it plays a direct role in the translocation of protons across the membrane. The protein is ATP synthase subunit a of Mycoplasma genitalium (strain ATCC 33530 / DSM 19775 / NCTC 10195 / G37) (Mycoplasmoides genitalium).